The primary structure comprises 539 residues: D-mannonate oxidoreductase (539 aa).

Position 39–50 (39–50 (WVHFGGGNIFRG)) interacts with NAD(+).

This sequence belongs to the mannitol dehydrogenase family. UxuB subfamily.

It catalyses the reaction D-mannonate + NAD(+) = keto-D-fructuronate + NADH + H(+). It participates in carbohydrate metabolism. Functionally, catalyzes the reduction of D-fructuronate (D-FruA) to D-mannonate (D-ManA). This is D-mannonate oxidoreductase from Thermotoga maritima (strain ATCC 43589 / DSM 3109 / JCM 10099 / NBRC 100826 / MSB8).